Here is a 303-residue protein sequence, read N- to C-terminus: ASC1-like protein (303 aa).

6 consecutive transmembrane segments (helical) span residues Y19–L39, C81–F101, A127–E147, F153–I173, Y212–S232, and Y255–I275. The region spanning R72–Q284 is the TLC domain.

It localises to the endoplasmic reticulum membrane. Its function is as follows. Mediates resistance to sphinganine-analog mycotoxins (SAMs) by restoring the sphingolipid biosynthesis. Could salvage the transport of GPI-anchored proteins from the endoplasmic reticulum to the Golgi apparatus in ceramides-depleted cells after SAM exposure. The polypeptide is ASC1-like protein (Solanum lycopersicum (Tomato)).